The chain runs to 201 residues: MARGRKLTMSQSERYLGSSYSYGDSNGNSATDESELTEEDIWSHAVDHSPEMLESHGAWNTRDAVVRNGRVGGGLSLAFEDASSSPRIVHQIRGGGEGGGGGGGGGRVERQLASSAPVNVPDWSKIYRVNSVESIHESDEEEEEDSGMMMPPHEYLAKSQQRRSRKSGGGGSVFEGVGRTLKGRELRRVRDAIWSQTGFYG.

Disordered stretches follow at residues 1–39 (MARG…LTEE) and 134–178 (SIHE…EGVG). The span at 17-29 (GSSYSYGDSNGNS) shows a compositional bias: low complexity.

This sequence belongs to the senescence regulator S40 family.

It localises to the cytoplasm. This is Protein S40-5 from Arabidopsis thaliana (Mouse-ear cress).